Consider the following 442-residue polypeptide: Histidine--tRNA ligase (442 aa).

The tract at residues 416-442 (SGDETTVPVEEFPPEGGEELPTYEDYE) is disordered. Acidic residues predominate over residues 427 to 442 (FPPEGGEELPTYEDYE).

Belongs to the class-II aminoacyl-tRNA synthetase family.

It is found in the cytoplasm. It carries out the reaction tRNA(His) + L-histidine + ATP = L-histidyl-tRNA(His) + AMP + diphosphate + H(+). This chain is Histidine--tRNA ligase, found in Halorubrum lacusprofundi (strain ATCC 49239 / DSM 5036 / JCM 8891 / ACAM 34).